A 684-amino-acid chain; its full sequence is Signal peptide peptidase-like 2C (684 aa).

The N-terminal stretch at 1–21 (MACLGFLLPVGFLLLISTVAG) is a signal peptide. Residues 22–186 (GKYGVAHVVS…APPEPIIDYN (165 aa)) lie on the Lumenal side of the membrane. A PA domain is found at 83 to 163 (SPSQRPLRQT…HYADMLDILS (81 aa)). A glycan (N-linked (GlcNAc...) asparagine) is linked at asparagine 100. The helical transmembrane segment at 187 to 207 (MLVIFILAVGTVAAGGYWAGL) threads the bilayer. The Cytoplasmic segment spans residues 208 to 253 (TEANRLQRRRARRGGGSGGHHQLQEAAAAEGAQKEDNEDIPVDFTP). Positions 216–242 (RRARRGGGSGGHHQLQEAAAAEGAQKE) are disordered. The segment covering 227–238 (HHQLQEAAAAEG) has biased composition (low complexity). A helical membrane pass occupies residues 254–274 (AMTGVVVTLSCSLMLLLYFFY). The Lumenal segment spans residues 275–276 (DH). The helical transmembrane segment at 277–297 (FVYVTIGIFGLGAGIGLYSCL) threads the bilayer. Residues 298-319 (SPLVCRLSLRQYQRPPHSLWAS) lie on the Cytoplasmic side of the membrane. Residues 320–340 (LPLPLLLLASLCATVIIFWVA) traverse the membrane as a helical segment. Residues 341–346 (YRNEDR) are Lumenal-facing. A helical membrane pass occupies residues 347–365 (WAWLLQDTLGISYCLFVLH). The Cytoplasmic segment spans residues 366–376 (RVRLPTLKNCS). A helical membrane pass occupies residues 377–397 (SFLLALLAFDVFFVFVTPFFT). Residue aspartate 386 is part of the active site. The Lumenal portion of the chain corresponds to 398–439 (KTGESIMAQVALGPAESSSHERLPMVLKVPRLRVSALTLCSQ). The chain crosses the membrane as a helical span at residues 440-460 (PFSILGFGDIVVPGFLVAYCC). Aspartate 448 is an active-site residue. Residues 461–472 (RFDVQVCSRQIY) are Cytoplasmic-facing. The chain crosses the membrane as a helical span at residues 473–493 (FVACTVAYAVGLLVTFMAMVL). The Lumenal portion of the chain corresponds to 494 to 495 (MQ). Residues 496 to 516 (MGQPALLYLVSSTLLTSLAVA) traverse the membrane as a helical segment. A PAL motif is present at residues 499–501 (PAL). The Cytoplasmic segment spans residues 517-684 (ACRQELSLFW…RKSMSTQAPL (168 aa)). Residues 548-614 (KQEGAADAHT…SDAHLDPNEL (67 aa)) form a disordered region. Polar residues predominate over residues 582-592 (EIVTISENEAT). The segment covering 594 to 611 (PEDRSDSSEGWSDAHLDP) has biased composition (basic and acidic residues).

It belongs to the peptidase A22B family. Interacts (via active sites) with FREY; the interaction stabilizes FREY1 protein and inhibits SPPL2C proteolytic activity. In terms of processing, glycosylated. Highly expressed in testis where it is primarily localised in spermatids (at protein level).

It localises to the endoplasmic reticulum membrane. In terms of biological role, sperm-specific intramembrane-cleaving aspartic protease (I-CLiP) that cleaves distinct tail-anchored proteins and SNARE proteins. In elongated spermatids, modulates intracellular Ca(2+) homeostasis by controlling PLN abundance through proteolytic cleavage. During spermatogenesis, processes SNARE proteins and impacts vesicular trafficking which supports compartmental reorganization in maturating spermatids and may play a role in formation of the acrosome. Functionally, in round spermatids, acts as a scaffold protein supporting FREY1 in IZUMO1 recruitment at the endoplasmic reticulum membrane and coordination of IZUMO1 complex assembly. Stabilizes FREY1 at the endoplasmic reticulum membrane through interaction. May recruit IZUMO1 interaction partners. This is Signal peptide peptidase-like 2C from Homo sapiens (Human).